The primary structure comprises 523 residues: uncharacterized protein (523 aa).

Residues 1–63 (MACVSTCLIL…NRHGIAVVKA (63 aa)) constitute a chloroplast transit peptide. The next 3 membrane-spanning stretches (helical) occupy residues 180–200 (VSFG…IIAL), 386–406 (ALVI…NTLL), and 423–443 (IYPL…IRWF).

Its subcellular location is the plastid. It is found in the chloroplast membrane. This is an uncharacterized protein from Arabidopsis thaliana (Mouse-ear cress).